The primary structure comprises 582 residues: Calcium-dependent protein kinase 24 (582 aa).

The interval 1 to 36 is disordered; the sequence is MGSCVSSPLKGSPFGKRPVRRRHSSNSRTSSVPRFD. A lipid anchor (N-myristoyl glycine) is attached at glycine 2. The region spanning 66-324 is the Protein kinase domain; it reads YDLGKELGRG…VQEVLEHPWI (259 aa). Residues 72–80 and lysine 95 contribute to the ATP site; that span reads LGRGEFGVT. Catalysis depends on aspartate 190, which acts as the Proton acceptor. At serine 230 the chain carries Phosphoserine. The autoinhibitory domain stretch occupies residues 330-360; it reads APNVNLGDNVRTKIQQFLLMNRFKKKVLRIV. EF-hand domains are found at residues 367 to 402, 403 to 438, 439 to 474, and 478 to 513; these read EEIA…IGQV, VPDG…LKRM, GCDE…DKLG, and GNDQ…GTDW. 18 residues coordinate Ca(2+): aspartate 380, aspartate 382, asparagine 384, histidine 386, glutamate 391, aspartate 416, aspartate 418, asparagine 420, methionine 422, glutamate 427, aspartate 452, asparagine 454, asparagine 456, glutamate 463, aspartate 491, asparagine 493, aspartate 495, and arginine 497. At serine 499 the chain carries Phosphoserine. Ca(2+) is bound at residue glutamate 502.

The protein belongs to the protein kinase superfamily. Ser/Thr protein kinase family. CDPK subfamily.

It localises to the membrane. It carries out the reaction L-seryl-[protein] + ATP = O-phospho-L-seryl-[protein] + ADP + H(+). The catalysed reaction is L-threonyl-[protein] + ATP = O-phospho-L-threonyl-[protein] + ADP + H(+). Its activity is regulated as follows. Activated by calcium. Autophosphorylation may play an important role in the regulation of the kinase activity. May play a role in signal transduction pathways that involve calcium as a second messenger. The protein is Calcium-dependent protein kinase 24 (CPK24) of Arabidopsis thaliana (Mouse-ear cress).